The chain runs to 653 residues: uncharacterized protein (653 aa).

Transmembrane regions (helical) follow at residues 39 to 59 (AMTT…LKLI) and 207 to 227 (AVFV…AFTI). One can recognise an HAMP domain in the interval 225 to 277 (FTITKPIRELLTGVKNIASGDFHQRISLPFGGELGALIFNFNEMAERLEKYEQ). In terms of domain architecture, PAS spans 286–356 (EKAKLETLVS…PALNDIVRKN (71 aa)). The region spanning 421–651 (NVSHELRTPL…CFFFDLIIAK (231 aa)) is the Histidine kinase domain. A Phosphohistidine; by autocatalysis modification is found at His-424.

The protein localises to the plastid. It is found in the chloroplast membrane. The catalysed reaction is ATP + protein L-histidine = ADP + protein N-phospho-L-histidine.. This is an uncharacterized protein from Pyropia yezoensis (Susabi-nori).